The chain runs to 39 residues: Potassium channel toxin alpha-KTx 2.24 (39 aa).

Disulfide bonds link C7–C29, C13–C34, and C17–C36.

It belongs to the short scorpion toxin superfamily. Potassium channel inhibitor family. Alpha-KTx 02 subfamily. As to expression, expressed by the venom gland.

The protein localises to the secreted. Its function is as follows. Blocks human voltage-gated potassium (Kv) channels Kv1.1/KCNA, Kv1.2/KCNA2 and Kv1.3/KCNA3. Exhibits high affinity for Kv1.2/KCNA2 and selectivity over Kv1.1/KCNA and Kv1.3/KCNA3. The polypeptide is Potassium channel toxin alpha-KTx 2.24 (Centruroides bonito (Scorpion)).